A 407-amino-acid polypeptide reads, in one-letter code: Phosphopentomutase (407 aa).

Positions 10, 306, 311, 347, 348, and 359 each coordinate Mn(2+).

It belongs to the phosphopentomutase family. It depends on Mn(2+) as a cofactor.

It is found in the cytoplasm. The enzyme catalyses 2-deoxy-alpha-D-ribose 1-phosphate = 2-deoxy-D-ribose 5-phosphate. It catalyses the reaction alpha-D-ribose 1-phosphate = D-ribose 5-phosphate. Its pathway is carbohydrate degradation; 2-deoxy-D-ribose 1-phosphate degradation; D-glyceraldehyde 3-phosphate and acetaldehyde from 2-deoxy-alpha-D-ribose 1-phosphate: step 1/2. Isomerase that catalyzes the conversion of deoxy-ribose 1-phosphate (dRib-1-P) and ribose 1-phosphate (Rib-1-P) to deoxy-ribose 5-phosphate (dRib-5-P) and ribose 5-phosphate (Rib-5-P), respectively. The protein is Phosphopentomutase of Yersinia pestis bv. Antiqua (strain Angola).